The primary structure comprises 193 residues: MSEKSIVREAKDIRLAMELITLGARLQMLESETQLSRGRLIKLYKELRGSPPPKGMLPFSTDWFMTWEQNIHSSMFYNAYRFLLKSGGSVGIEAVVKAYRLYLEQCPPVKDQEPILALTRAWTLVRFVESGMLQLSVCTKCNGSFITHAHQPASNYVCSLCQPPSRAIKKRKLSANPADINLQLLDGLEQFRM.

Zn(2+) is bound by residues Cys138, Cys141, Cys158, and Cys161.

It belongs to the FlhC family. As to quaternary structure, heterohexamer composed of two FlhC and four FlhD subunits. Each FlhC binds a FlhD dimer, forming a heterotrimer, and a hexamer assembles by dimerization of two heterotrimers. It depends on Zn(2+) as a cofactor.

It localises to the cytoplasm. Functionally, functions in complex with FlhD as a master transcriptional regulator that regulates transcription of several flagellar and non-flagellar operons by binding to their promoter region. Activates expression of class 2 flagellar genes, including fliA, which is a flagellum-specific sigma factor that turns on the class 3 genes. Also regulates genes whose products function in a variety of physiological pathways. The polypeptide is Flagellar transcriptional regulator FlhC (Proteus mirabilis).